The primary structure comprises 118 residues: Small ribosomal subunit protein uS13 (118 aa).

The disordered stretch occupies residues 94–118 (SLPLRGQRTKTNARTRKGPRKPIKK).

Belongs to the universal ribosomal protein uS13 family. As to quaternary structure, part of the 30S ribosomal subunit. Forms a loose heterodimer with protein S19. Forms two bridges to the 50S subunit in the 70S ribosome.

Its function is as follows. Located at the top of the head of the 30S subunit, it contacts several helices of the 16S rRNA. In the 70S ribosome it contacts the 23S rRNA (bridge B1a) and protein L5 of the 50S subunit (bridge B1b), connecting the 2 subunits; these bridges are implicated in subunit movement. Contacts the tRNAs in the A and P-sites. The chain is Small ribosomal subunit protein uS13 from Vibrio cholerae serotype O1 (strain ATCC 39315 / El Tor Inaba N16961).